A 371-amino-acid polypeptide reads, in one-letter code: 4-hydroxy-3-methylbut-2-en-1-yl diphosphate synthase (flavodoxin) (371 aa).

The [4Fe-4S] cluster site is built by cysteine 271, cysteine 274, cysteine 306, and glutamate 313.

Belongs to the IspG family. It depends on [4Fe-4S] cluster as a cofactor.

It catalyses the reaction (2E)-4-hydroxy-3-methylbut-2-enyl diphosphate + oxidized [flavodoxin] + H2O + 2 H(+) = 2-C-methyl-D-erythritol 2,4-cyclic diphosphate + reduced [flavodoxin]. It participates in isoprenoid biosynthesis; isopentenyl diphosphate biosynthesis via DXP pathway; isopentenyl diphosphate from 1-deoxy-D-xylulose 5-phosphate: step 5/6. In terms of biological role, converts 2C-methyl-D-erythritol 2,4-cyclodiphosphate (ME-2,4cPP) into 1-hydroxy-2-methyl-2-(E)-butenyl 4-diphosphate. In Actinobacillus succinogenes (strain ATCC 55618 / DSM 22257 / CCUG 43843 / 130Z), this protein is 4-hydroxy-3-methylbut-2-en-1-yl diphosphate synthase (flavodoxin).